The following is an 87-amino-acid chain: Small ribosomal subunit protein bS18 (87 aa).

The segment at 1–21 is disordered; it reads MRHKPTPPKGNKSLGNALASK.

Belongs to the bacterial ribosomal protein bS18 family. In terms of assembly, part of the 30S ribosomal subunit. Forms a tight heterodimer with protein bS6.

Binds as a heterodimer with protein bS6 to the central domain of the 16S rRNA, where it helps stabilize the platform of the 30S subunit. The protein is Small ribosomal subunit protein bS18 of Chlorobium phaeobacteroides (strain DSM 266 / SMG 266 / 2430).